The sequence spans 148 residues: UPF0756 membrane protein YeaL (148 aa).

4 helical membrane-spanning segments follow: residues A14–V34, L51–L71, L86–M106, and V121–V141.

This sequence belongs to the UPF0756 family.

It is found in the cell membrane. This chain is UPF0756 membrane protein YeaL, found in Escherichia coli (strain B / REL606).